A 798-amino-acid polypeptide reads, in one-letter code: Phenylalanine--tRNA ligase beta subunit (798 aa).

Residues Phe-39–Val-148 enclose the tRNA-binding domain. Residues Trp-402–Pro-478 enclose the B5 domain. Mg(2+) contacts are provided by Asp-456, Asp-462, Glu-465, and Glu-466. The FDX-ACB domain occupies Pro-708–Ile-798.

The protein belongs to the phenylalanyl-tRNA synthetase beta subunit family. Type 1 subfamily. In terms of assembly, tetramer of two alpha and two beta subunits. Mg(2+) serves as cofactor.

The protein resides in the cytoplasm. The catalysed reaction is tRNA(Phe) + L-phenylalanine + ATP = L-phenylalanyl-tRNA(Phe) + AMP + diphosphate + H(+). The protein is Phenylalanine--tRNA ligase beta subunit of Nitratidesulfovibrio vulgaris (strain ATCC 29579 / DSM 644 / CCUG 34227 / NCIMB 8303 / VKM B-1760 / Hildenborough) (Desulfovibrio vulgaris).